Consider the following 437-residue polypeptide: Phosphoglucosamine mutase (437 aa).

Ser-93 serves as the catalytic Phosphoserine intermediate. Mg(2+) is bound by residues Ser-93, Asp-230, Asp-232, and Asp-234. Ser-93 bears the Phosphoserine mark.

The protein belongs to the phosphohexose mutase family. Mg(2+) serves as cofactor. In terms of processing, activated by phosphorylation.

The enzyme catalyses alpha-D-glucosamine 1-phosphate = D-glucosamine 6-phosphate. Its function is as follows. Catalyzes the conversion of glucosamine-6-phosphate to glucosamine-1-phosphate. The chain is Phosphoglucosamine mutase from Clavibacter michiganensis subsp. michiganensis (strain NCPPB 382).